A 190-amino-acid polypeptide reads, in one-letter code: Adenine phosphoribosyltransferase (190 aa).

Belongs to the purine/pyrimidine phosphoribosyltransferase family. In terms of assembly, homodimer.

Its subcellular location is the cytoplasm. It catalyses the reaction AMP + diphosphate = 5-phospho-alpha-D-ribose 1-diphosphate + adenine. Its pathway is purine metabolism; AMP biosynthesis via salvage pathway; AMP from adenine: step 1/1. Catalyzes a salvage reaction resulting in the formation of AMP, that is energically less costly than de novo synthesis. The sequence is that of Adenine phosphoribosyltransferase from Treponema pallidum (strain Nichols).